We begin with the raw amino-acid sequence, 530 residues long: UDP-glucuronosyltransferase 2B15 (530 aa).

Positions 1 to 23 (MSGKWISALLLLQISFCFKSGNC) are cleaved as a signal peptide. N-linked (GlcNAc...) asparagine glycosylation occurs at N316. Residues 494–510 (VIGFLLSCVAVTVVLAL) traverse the membrane as a helical segment.

The protein belongs to the UDP-glycosyltransferase family. Post-translationally, N-glycosylated. As to expression, liver. Lower levels seen in the kidney and testis.

Its subcellular location is the endoplasmic reticulum membrane. The enzyme catalyses glucuronate acceptor + UDP-alpha-D-glucuronate = acceptor beta-D-glucuronoside + UDP + H(+). It catalyses the reaction 17alpha-estradiol + UDP-alpha-D-glucuronate = 17alpha-estradiol 3-O-(beta-D-glucuronate) + UDP + H(+). The catalysed reaction is 16alpha,17alpha-estriol + UDP-alpha-D-glucuronate = 16alpha,17alpha-estriol 3-O-(beta-D-glucuronate) + UDP + H(+). It carries out the reaction 17beta-hydroxy-5alpha-androstan-3-one + UDP-alpha-D-glucuronate = 5alpha-dihydrotestosterone 17-O-(beta-D-glucuronate) + UDP + H(+). Its function is as follows. UDP-glucuronosyltransferase (UGT) that catalyzes phase II biotransformation reactions in which lipophilic substrates are conjugated with glucuronic acid to increase the metabolite's water solubility, thereby facilitating excretion into either the urine or bile. Essential for the elimination and detoxification of drugs, xenobiotics and endogenous compounds. Catalyzes the glucuronidation of endogenous steroid hormones such as androgens (testosterone, androsterone) and estrogens (estradiol, epiestradiol, estriol, catechol estrogens). Displays glucuronidation activity toward several classes of xenoblotic substrates, including phenolic compounds (eugenol, 4-nitrophenol, 4-hydroxybiphenyl) and phenylpropanoids (naringenin, coumarins). Catalyzes the glucuronidation of monoterpenoid alcohols such as borneol, menthol and isomenthol, a class of natural compounds used in essential oils. In Rattus norvegicus (Rat), this protein is UDP-glucuronosyltransferase 2B15.